Consider the following 469-residue polypeptide: Probable multidrug resistance protein NorM (469 aa).

A run of 12 helical transmembrane segments spans residues 10 to 30, 34 to 54, 74 to 94, 121 to 141, 179 to 199, 214 to 234, 264 to 284, 292 to 312, 335 to 355, 369 to 389, 409 to 429, and 437 to 457; these read IALF…GSEV, LLLA…GFVL, ALLW…TVLV, GLVM…FGIV, FPTM…SYAL, LGIA…LYLW, LPIG…TLLI, IAAH…PMGV, VAWA…SVLL, LVVA…QFPD, MLLA…GLGF, and GMWI…GWRF.

Belongs to the multi antimicrobial extrusion (MATE) (TC 2.A.66.1) family.

Its subcellular location is the cell inner membrane. In terms of biological role, multidrug efflux pump. In Xylella fastidiosa (strain 9a5c), this protein is Probable multidrug resistance protein NorM (norM).